A 298-amino-acid chain; its full sequence is Protoheme IX farnesyltransferase (298 aa).

8 helical membrane-spanning segments follow: residues 24–44 (VVSL…PAWP), 46–66 (WTTI…AAAF), 97–117 (LVFA…VVNP), 118–138 (LTMW…TVLL), 146–166 (IVIG…AATG), 172–192 (ALLL…ALAL), 231–251 (LLPV…VLLG), and 278–298 (IWYL…PIPV).

The protein belongs to the UbiA prenyltransferase family. Protoheme IX farnesyltransferase subfamily.

Its subcellular location is the cell inner membrane. It catalyses the reaction heme b + (2E,6E)-farnesyl diphosphate + H2O = Fe(II)-heme o + diphosphate. It functions in the pathway porphyrin-containing compound metabolism; heme O biosynthesis; heme O from protoheme: step 1/1. Functionally, converts heme B (protoheme IX) to heme O by substitution of the vinyl group on carbon 2 of heme B porphyrin ring with a hydroxyethyl farnesyl side group. This is Protoheme IX farnesyltransferase from Thiobacillus denitrificans (strain ATCC 25259 / T1).